The primary structure comprises 260 residues: Global transcriptional regulator CodY (260 aa).

A GAF domain region spans residues 1-159; the sequence is MPNLLQKTRK…SSTVVGIQLL (159 aa). A DNA-binding region (H-T-H motif) is located at residues 207-226; sequence ASVIADRIGITRSVIVNALR.

This sequence belongs to the CodY family.

The protein resides in the cytoplasm. Its function is as follows. DNA-binding global transcriptional regulator which is involved in the adaptive response to starvation and acts by directly or indirectly controlling the expression of numerous genes in response to nutrient availability. During rapid exponential growth, CodY is highly active and represses genes whose products allow adaptation to nutrient depletion. This Streptococcus equi subsp. zooepidemicus (strain MGCS10565) protein is Global transcriptional regulator CodY.